The following is an 895-amino-acid chain: MAFGRGRGNKRTSTSSYASTITMVIFVALCVFGVWMLSSNSVIPPQITQGSTRAAVAETERSDVSASSNGNDEPEPTKQESDEQQAFEDNPGKLPDDAVKSEDEQRKSAKEKSETTSSKTQTQETQQNNDDKISEEKEKDNGKENQTVQESEEGQMKKVVKEFEKEQKQQRDEDAGTQPKGTQGQEQGQGKEQPDVEQGNKQGQEQDSNTDVTFTDATKQEQPMETGQGETSETSKNEENGQPEEQNSGNEETGQQNEEKTTASEENGKGEKSMKDENGQQEEHTTAEEESGNKEEESTSKDENMEQQEERKDEKKHEQGSEASGFGSGIPKESAESQKSWKSQATESKDEKQRQTSESNTVERIMDGNAWVLCNATAGTDYIPCLDNEEAIMKLRSRRHFEHRERHCPEDPPTCLVPLPEGYKEAIKWPESRDKIWYHNVPHTKLAEVKGHQNWVKVTGEFLTFPGGGTQFIHGALHYIDFLQQSLKNIAWGKRTRVILDVGCGVASFGGFLFERDVIAMSLAPKDEHEAQVQFALERKIPAISAVMGSKRLPFPSRVFDLIHCARCRVPWHNEGGMLLLELNRMLRPGGYFVWSATPVYQKLEEDVQIWKEMSALTKSLCWELVTINKDKLNGIGAAIYQKPATNECYEKRKHNKPPLCKNNDDANAAWYVPLQACMHKVPTNVVERGSKWPVNWPRRLQTPPYWLNSSQMGIYGKPAPRDFTTDYEHWKHVVSKVYMNEIGISWSNVRNVMDMRAVYGGFAAALKDLQVWVMNVVNINSPDTLPIIYERGLFGIYHDWCESFSTYPRSYDLLHADHLFSKLRTRCNLVPVMAEVDRIVRPGGKLIVRDESNVIREVENMLKSLHWDVHLTFSKHQEGILSAQKGFWRPETSQ.

The Cytoplasmic segment spans residues 1–16 (MAFGRGRGNKRTSTSS). Residues 17–37 (YASTITMVIFVALCVFGVWML) traverse the membrane as a helical; Signal-anchor for type II membrane protein segment. Topologically, residues 38–895 (SSNSVIPPQI…KGFWRPETSQ (858 aa)) are lumenal. Positions 43 to 52 (IPPQITQGST) are enriched in polar residues. A disordered region spans residues 43–362 (IPPQITQGST…QRQTSESNTV (320 aa)). Positions 90–114 (NPGKLPDDAVKSEDEQRKSAKEKSE) are enriched in basic and acidic residues. Low complexity predominate over residues 115 to 127 (TTSSKTQTQETQQ). Over residues 129-143 (NDDKISEEKEKDNGK) the composition is skewed to basic and acidic residues. Asn-145 is a glycosylation site (N-linked (GlcNAc...) asparagine). A compositionally biased stretch (basic and acidic residues) spans 154-174 (GQMKKVVKEFEKEQKQQRDED). Low complexity predominate over residues 176-191 (GTQPKGTQGQEQGQGK). Composition is skewed to polar residues over residues 199 to 232 (GNKQGQEQDSNTDVTFTDATKQEQPMETGQGETS) and 243 to 256 (PEEQNSGNEETGQQ). A compositionally biased stretch (basic and acidic residues) spans 257–320 (NEEKTTASEE…RKDEKKHEQG (64 aa)). The span at 337 to 346 (SQKSWKSQAT) shows a compositional bias: polar residues. 2 N-linked (GlcNAc...) asparagine glycosylation sites follow: Asn-375 and Asn-709.

The protein belongs to the methyltransferase superfamily.

It is found in the endoplasmic reticulum membrane. The sequence is that of Probable methyltransferase PMT27 from Arabidopsis thaliana (Mouse-ear cress).